Consider the following 271-residue polypeptide: Nus factor SuhB (271 aa).

The Mg(2+) site is built by glutamate 67, aspartate 86, and leucine 88. Substrate is bound at residue glutamate 67. Residues 88 to 91 (LDGT), arginine 187, and aspartate 216 each bind substrate.

It belongs to the inositol monophosphatase superfamily. In terms of assembly, homodimer. The rRNA transcription and antitermination complex (rrnTAC) consists of RNA polymerase (RNAP), NusA, NusB, NusE (rpsJ), NusG, SubB, ribosomal protein S4, DNA and precursor rRNA; S4 is more flexible than other subunits. Interacts with the ribosome and with RNA polymerase. Mg(2+) is required as a cofactor.

The protein localises to the cytoplasm. It catalyses the reaction a myo-inositol phosphate + H2O = myo-inositol + phosphate. Part of the processive rRNA transcription and antitermination complex (rrnTAC). The complex forms an RNA-chaperone ring around the RNA exit tunnel of RNA polymerase (RNAP). It supports rapid transcription and antitermination of rRNA operons, cotranscriptional rRNA folding, and annealing of distal rRNA regions to allow correct ribosome biogenesis. This subunit may play a central role in organizing the structure. Its function is as follows. A ribosome-associated protein, deletion of which alters the expression of 494 genes, suggesting a role in global gene regulation. Involved in control of pathogenesis-related genes. Required for the activation of virulence factors associated with acute infections (type 3 secretion system, T3SS) while suppressing virulence factors associated with chronic infections (biofilm formation and type 6 secretion system, T6SS). It probably acts at a post-transcriptional level. In Pseudomonas aeruginosa (strain ATCC 15692 / DSM 22644 / CIP 104116 / JCM 14847 / LMG 12228 / 1C / PRS 101 / PAO1), this protein is Nus factor SuhB.